We begin with the raw amino-acid sequence, 314 residues long: tRNA pseudouridine synthase B (314 aa).

H43 is a binding site for substrate. D48 (nucleophile) is an active-site residue. Positions 76, 179, and 200 each coordinate substrate.

Belongs to the pseudouridine synthase TruB family. Type 1 subfamily.

The catalysed reaction is uridine(55) in tRNA = pseudouridine(55) in tRNA. Its function is as follows. Responsible for synthesis of pseudouridine from uracil-55 in the psi GC loop of transfer RNAs. The sequence is that of tRNA pseudouridine synthase B from Enterobacter sp. (strain 638).